Consider the following 431-residue polypeptide: Neuronal pentraxin-2 (431 aa).

An N-terminal signal peptide occupies residues 1-15; that stretch reads MLALLAASVALAVAA. 2 N-linked (GlcNAc...) asparagine glycosylation sites follow: N148 and N189. A Pentraxin (PTX) domain is found at 223–424; the sequence is DAFKVSLPLR…GASKWPVETC (202 aa). A disulfide bond links C253 and C313. 5 residues coordinate Ca(2+): N277, E355, Q356, D357, and Q367. A glycan (N-linked (GlcNAc...) asparagine) is linked at N393.

In terms of assembly, homooligomer or heterooligomer (probably pentamer) with neuronal pentraxin receptor (NPTXR). Ca(2+) is required as a cofactor. As to expression, brain, pancreas, liver, heart and skeletal muscle. Highest levels are seen in the testis.

It localises to the secreted. Likely to play role in the modification of cellular properties that underlie long-term plasticity. Binds to agar matrix in a calcium-dependent manner. This chain is Neuronal pentraxin-2 (NPTX2), found in Homo sapiens (Human).